A 306-amino-acid polypeptide reads, in one-letter code: MATCEEVPEALKGQLDVARGLENLPVSAWPPGAEPEPFQYTPDHVAGPGADADPSQITFPGCACLKTPCLPGTCSCLRHENNYDDRSCLRDIGSEAKCTEPVFECNVLCQCSERCRNRVVQWGLQFHLQVFKTDHKGWGLRTLDFIPKGRFVCEYAGEVLGISEVQRRVQLQTIHDSNYIIAIREHVYNGQVMETFVDPASIGNIGRFLNHSCEPNLLMIPVRIDSMVPKLALFAARDILPEEELSYDYSGRFLNLMHSEDKERLDNGKLRKPCYCGARSCAAFLPYDSSLYCPTEKPDTSEEGRA.

The Pre-SET domain maps to 60-123 (PGCACLKTPC…RCRNRVVQWG (64 aa)). Zn(2+) contacts are provided by C62, C64, C69, C74, C76, C105, C109, C111, and C115. An SET domain is found at 126 to 250 (FHLQVFKTDH…PEEELSYDYS (125 aa)). S-adenosyl-L-methionine is bound by residues 136-138 (KGW), Y179, R207, and 210-211 (NH). Residues C213, C274, C276, and C281 each contribute to the Zn(2+) site. Residues 270-286 (LRKPCYCGARSCAAFLP) enclose the Post-SET domain.

This sequence belongs to the class V-like SAM-binding methyltransferase superfamily.

The protein localises to the nucleus. It localises to the chromosome. It catalyses the reaction L-lysyl(36)-[histone H3] + 2 S-adenosyl-L-methionine = N(6),N(6)-dimethyl-L-lysyl(36)-[histone H3] + 2 S-adenosyl-L-homocysteine + 2 H(+). Functionally, histone methyltransferase that methylates 'Lys-4' and 'Lys-36' of histone H3, 2 specific tags for epigenetic transcriptional activation. Specifically mediates dimethylation of H3 'Lys-36'. The sequence is that of Histone-lysine N-methyltransferase SETMAR from Bos taurus (Bovine).